Consider the following 263-residue polypeptide: Endonuclease 8 (263 aa).

The active-site Schiff-base intermediate with DNA is the Pro2. The active-site Proton donor is the Glu3. Lys53 acts as the Proton donor; for beta-elimination activity in catalysis. Positions 70, 125, and 169 each coordinate DNA. Residues 229–263 form an FPG-type zinc finger; sequence KVFHRDGEACERCGGIIEKTTLSSRPFYWCPHCQK. Residue Arg253 is the Proton donor; for delta-elimination activity of the active site.

This sequence belongs to the FPG family. It depends on Zn(2+) as a cofactor.

The enzyme catalyses 2'-deoxyribonucleotide-(2'-deoxyribose 5'-phosphate)-2'-deoxyribonucleotide-DNA = a 3'-end 2'-deoxyribonucleotide-(2,3-dehydro-2,3-deoxyribose 5'-phosphate)-DNA + a 5'-end 5'-phospho-2'-deoxyribonucleoside-DNA + H(+). In terms of biological role, involved in base excision repair of DNA damaged by oxidation or by mutagenic agents. Acts as a DNA glycosylase that recognizes and removes damaged bases. Has a preference for oxidized pyrimidines, such as thymine glycol, 5,6-dihydrouracil and 5,6-dihydrothymine. Has AP (apurinic/apyrimidinic) lyase activity and introduces nicks in the DNA strand. Cleaves the DNA backbone by beta-delta elimination to generate a single-strand break at the site of the removed base with both 3'- and 5'-phosphates. This Salmonella dublin (strain CT_02021853) protein is Endonuclease 8.